Consider the following 1433-residue polypeptide: Inositol hexakisphosphate and diphosphoinositol-pentakisphosphate kinase 1 (1433 aa).

64 to 65 (KK) lines the substrate pocket. Residues R145, K198, H205, R224, 248 to 251 (EEFM), and 257 to 259 (DVK) each bind ATP. 224 to 225 (RK) provides a ligand contact to substrate. 2 residues coordinate substrate: K259 and R273. ATP-binding positions include S275, D320, and 332 to 334 (DVN). 337–340 (SFVK) lines the substrate pocket. The interval 382–453 (PTTSGTMMEL…VLDITRLLLA (72 aa)) is polyphosphoinositide-binding domain. Positions 915–1020 (GVEEEGSAPA…PTEMKQSGLG (106 aa)) are disordered. S944 and S987 each carry phosphoserine. A compositionally biased stretch (polar residues) spans 1005 to 1020 (FSSSRPPTEMKQSGLG). S1037 and S1073 each carry phosphoserine. A compositionally biased stretch (polar residues) spans 1134 to 1143 (MHSSQASDNP). 2 disordered regions span residues 1134–1199 (MHSS…DQPS) and 1235–1257 (EPNQ…VSQP). Phosphoserine occurs at positions 1145 and 1152. The segment covering 1168-1186 (SSGPSSTVSSAGPSSPTTV) has biased composition (low complexity). Polar residues-rich tracts occupy residues 1187-1199 (DGNS…DQPS) and 1236-1250 (PNQS…TSQP).

Belongs to the histidine acid phosphatase family. VIP1 subfamily. As to expression, widely expressed, with a higher expression in skeletal muscle, heart and brain.

Its subcellular location is the cytoplasm. It is found in the cytosol. It localises to the cell membrane. It catalyses the reaction 1D-myo-inositol hexakisphosphate + ATP = 1-diphospho-1D-myo-inositol 2,3,4,5,6-pentakisphosphate + ADP. The catalysed reaction is 5-diphospho-1D-myo-inositol 1,2,3,4,6-pentakisphosphate + ATP + H(+) = 1,5-bis(diphospho)-1D-myo-inositol 2,3,4,6-tetrakisphosphate + ADP. In terms of biological role, bifunctional inositol kinase that acts in concert with the IP6K kinases IP6K1, IP6K2 and IP6K3 to synthesize the diphosphate group-containing inositol pyrophosphates diphosphoinositol pentakisphosphate, PP-InsP5, and bis-diphosphoinositol tetrakisphosphate, (PP)2-InsP4. PP-InsP5 and (PP)2-InsP4, also respectively called InsP7 and InsP8, regulate a variety of cellular processes, including apoptosis, vesicle trafficking, cytoskeletal dynamics, exocytosis, insulin signaling and neutrophil activation. Phosphorylates inositol hexakisphosphate (InsP6) at position 1 to produce PP-InsP5 which is in turn phosphorylated by IP6Ks to produce (PP)2-InsP4. Alternatively, phosphorylates PP-InsP5 at position 1, produced by IP6Ks from InsP6, to produce (PP)2-InsP4. Activated when cells are exposed to hyperosmotic stress. The chain is Inositol hexakisphosphate and diphosphoinositol-pentakisphosphate kinase 1 from Homo sapiens (Human).